A 709-amino-acid polypeptide reads, in one-letter code: Fatty acid oxidation complex subunit alpha (709 aa).

The enoyl-CoA hydratase stretch occupies residues 1 to 188; the sequence is MEKTFNLTRR…KMGLVNDVVP (188 aa). Residues 308–709 are 3-hydroxyacyl-CoA dehydrogenase; the sequence is RKVKKAVILG…AMAAEKARFF (402 aa).

In the N-terminal section; belongs to the enoyl-CoA hydratase/isomerase family. The protein in the central section; belongs to the 3-hydroxyacyl-CoA dehydrogenase family. Heterotetramer of two alpha chains (FadJ) and two beta chains (FadI).

It localises to the cytoplasm. The catalysed reaction is a (3S)-3-hydroxyacyl-CoA = a (2E)-enoyl-CoA + H2O. It carries out the reaction a 4-saturated-(3S)-3-hydroxyacyl-CoA = a (3E)-enoyl-CoA + H2O. It catalyses the reaction a (3S)-3-hydroxyacyl-CoA + NAD(+) = a 3-oxoacyl-CoA + NADH + H(+). The enzyme catalyses (3S)-3-hydroxybutanoyl-CoA = (3R)-3-hydroxybutanoyl-CoA. It functions in the pathway lipid metabolism; fatty acid beta-oxidation. Functionally, catalyzes the formation of a hydroxyacyl-CoA by addition of water on enoyl-CoA. Also exhibits 3-hydroxyacyl-CoA epimerase and 3-hydroxyacyl-CoA dehydrogenase activities. This Shewanella sp. (strain ANA-3) protein is Fatty acid oxidation complex subunit alpha.